The chain runs to 126 residues: Protein ApaG (126 aa).

Positions 2–126 constitute an ApaG domain; it reads NQRLSPIKVE…FSLAVPGLLH (125 aa).

The protein is Protein ApaG of Shewanella piezotolerans (strain WP3 / JCM 13877).